The sequence spans 219 residues: Probable transcriptional regulator flp (219 aa).

The HTH crp-type domain maps to 144-212 (DSINVRLTHY…GKQVRILNAE (69 aa)). A DNA-binding region (H-T-H motif) is located at residues 191 to 210 (KRLAEEKLIERSGKQVRILN).

The chain is Probable transcriptional regulator flp (flp) from Lacticaseibacillus casei (Lactobacillus casei).